The chain runs to 178 residues: ATP-dependent protease subunit HslV (178 aa).

The active site involves Thr-7. Na(+)-binding residues include Gly-162, Cys-165, and Thr-168.

Belongs to the peptidase T1B family. HslV subfamily. As to quaternary structure, a double ring-shaped homohexamer of HslV is capped on each side by a ring-shaped HslU homohexamer. The assembly of the HslU/HslV complex is dependent on binding of ATP.

It is found in the cytoplasm. The enzyme catalyses ATP-dependent cleavage of peptide bonds with broad specificity.. Its activity is regulated as follows. Allosterically activated by HslU binding. In terms of biological role, protease subunit of a proteasome-like degradation complex believed to be a general protein degrading machinery. The chain is ATP-dependent protease subunit HslV from Burkholderia multivorans (strain ATCC 17616 / 249).